A 278-amino-acid chain; its full sequence is Large ribosomal subunit protein uL2 (278 aa).

Disordered regions lie at residues Pro-29–Gly-55 and Val-225–Arg-278. A compositionally biased stretch (basic residues) spans Arg-258 to Arg-278.

This sequence belongs to the universal ribosomal protein uL2 family. Part of the 50S ribosomal subunit. Forms a bridge to the 30S subunit in the 70S ribosome. Post-translationally, the N-terminus is blocked. Phosphorylated on serine and threonine residues.

In terms of biological role, one of the primary rRNA binding proteins. Required for association of the 30S and 50S subunits to form the 70S ribosome, for tRNA binding and peptide bond formation. It has been suggested to have peptidyltransferase activity; this is somewhat controversial. Makes several contacts with the 16S rRNA in the 70S ribosome. The protein is Large ribosomal subunit protein uL2 of Streptomyces collinus.